Consider the following 555-residue polypeptide: Serine/threonine-protein kinase AGC1-7 (555 aa).

A disordered region spans residues Met1–Ile126. Basic and acidic residues-rich tracts occupy residues Lys7–His16 and Pro35–Ile54. Residues Ser84 to Ser118 are compositionally biased toward low complexity. The Protein kinase domain occupies Phe146–Phe480. ATP contacts are provided by residues Leu152 to Val160 and Lys175. The Proton acceptor role is filled by Asp271. The 75-residue stretch at Glu481 to Phe555 folds into the AGC-kinase C-terminal domain. The disordered stretch occupies residues Ala514 to Pro547. A compositionally biased stretch (gly residues) spans Gly526–Asp537.

The protein belongs to the protein kinase superfamily. AGC Ser/Thr protein kinase family. As to quaternary structure, interacts with PDPK1/PDK1. In terms of processing, autophosphorylated and phosphorylated by PDPK1/PDK1. As to expression, specifically expressed in pollen grains.

It localises to the cytoplasm. The catalysed reaction is L-seryl-[protein] + ATP = O-phospho-L-seryl-[protein] + ADP + H(+). It catalyses the reaction L-threonyl-[protein] + ATP = O-phospho-L-threonyl-[protein] + ADP + H(+). Activated by PDPK1/PDK1. In terms of biological role, functions redudantly with AGC1-5 as signaling component in the pollen tube. Required for polarized growth of pollen tubes. The sequence is that of Serine/threonine-protein kinase AGC1-7 from Arabidopsis thaliana (Mouse-ear cress).